A 363-amino-acid chain; its full sequence is Holliday junction branch migration complex subunit RuvB (363 aa).

A disordered region spans residues 1 to 32 (MSDVERTEFEIPGGIPPRRNGGQGRAADTNVD). A large ATPase domain (RuvB-L) region spans residues 27 to 207 (ADTNVDANLK…FGFTAQMEFY (181 aa)). ATP-binding positions include L46, R47, G88, K91, T92, T93, 154 to 156 (EDF), R197, Y207, and R244. Mg(2+) is bound at residue T92. A small ATPAse domain (RuvB-S) region spans residues 208–278 (DVPDLTKVVK…AANAALIVFD (71 aa)). A head domain (RuvB-H) region spans residues 281-363 (EVGLDRLDRA…EPPEGTIGDY (83 aa)). DNA-binding residues include R336 and R341.

Belongs to the RuvB family. As to quaternary structure, homohexamer. Forms an RuvA(8)-RuvB(12)-Holliday junction (HJ) complex. HJ DNA is sandwiched between 2 RuvA tetramers; dsDNA enters through RuvA and exits via RuvB. An RuvB hexamer assembles on each DNA strand where it exits the tetramer. Each RuvB hexamer is contacted by two RuvA subunits (via domain III) on 2 adjacent RuvB subunits; this complex drives branch migration. In the full resolvosome a probable DNA-RuvA(4)-RuvB(12)-RuvC(2) complex forms which resolves the HJ.

The protein resides in the cytoplasm. The enzyme catalyses ATP + H2O = ADP + phosphate + H(+). In terms of biological role, the RuvA-RuvB-RuvC complex processes Holliday junction (HJ) DNA during genetic recombination and DNA repair, while the RuvA-RuvB complex plays an important role in the rescue of blocked DNA replication forks via replication fork reversal (RFR). RuvA specifically binds to HJ cruciform DNA, conferring on it an open structure. The RuvB hexamer acts as an ATP-dependent pump, pulling dsDNA into and through the RuvAB complex. RuvB forms 2 homohexamers on either side of HJ DNA bound by 1 or 2 RuvA tetramers; 4 subunits per hexamer contact DNA at a time. Coordinated motions by a converter formed by DNA-disengaged RuvB subunits stimulates ATP hydrolysis and nucleotide exchange. Immobilization of the converter enables RuvB to convert the ATP-contained energy into a lever motion, pulling 2 nucleotides of DNA out of the RuvA tetramer per ATP hydrolyzed, thus driving DNA branch migration. The RuvB motors rotate together with the DNA substrate, which together with the progressing nucleotide cycle form the mechanistic basis for DNA recombination by continuous HJ branch migration. Branch migration allows RuvC to scan DNA until it finds its consensus sequence, where it cleaves and resolves cruciform DNA. The sequence is that of Holliday junction branch migration complex subunit RuvB from Corynebacterium glutamicum (strain R).